We begin with the raw amino-acid sequence, 437 residues long: MEFQIDVDFQNRKTEMFINGDDDLFPEMGDEDDSDGEDTLRNIEETTKKMMLASPDYLSFEELGANMIDCMSTGDVKMLIIEEGKGPLVPVDSEVTIHYAAYWEKAVIPFDSTLTMNMGAPKRLRLGTGKIIPGLEIGLTMVKGPQARLNLLVQPAAAWGPRGVPPRIRPEPALFVIVLYDVKDNYAATRFNDLPMAEQTKYEVTLRTVNALRADAKELYKKKKYVKAIKNYQQAISVLRLSRPGTADEELDIKNNKVNAYLNLAVCYYKTNKPKHVLNMCECLDRLIDTEKHCKALYYYGKAHEMLGKTEMAIKYYKKALKLEPKNKEIGKILADLDTKTKDFAVNEKAMWLKAFNVEVPATNAVYDVDATFQSDVLDMCQSLAGRSEFAKFDLPVGLTKNEVDCIKGIVSDFGCLSVDVSGEGRNKKVCIVKKIV.

The PPIase FKBP-type domain maps to 92 to 178; that stretch reads DSEVTIHYAA…RPEPALFVIV (87 aa). TPR repeat units follow at residues 209–242, 258–294, and 295–327; these read VNAL…LRLS, VNAY…EKHC, and KALY…EPKN.

Belongs to the FKBP6 family. As to quaternary structure, interacts with Hsp83.

The protein resides in the cytoplasm. Functionally, co-chaperone required during oogenesis to repress transposable elements and prevent their mobilization, which is essential for the germline integrity. Acts via the piRNA metabolic process, which mediates the repression of transposable elements during meiosis by forming complexes composed of piRNAs and Piwi proteins and govern the methylation and subsequent repression of transposons. Acts as a co-chaperone via its interaction with Hsp83/HSP90 and is required for the biogenesis of all three piRNA major populations. The chain is Inactive peptidyl-prolyl cis-trans isomerase shutdown (shu) from Bombyx mori (Silk moth).